Consider the following 63-residue polypeptide: Large ribosomal subunit protein bL28 (63 aa).

This sequence belongs to the bacterial ribosomal protein bL28 family.

The protein is Large ribosomal subunit protein bL28 of Petrotoga mobilis (strain DSM 10674 / SJ95).